Consider the following 108-residue polypeptide: MARDIGLNVPVPEKDCSDVNCPFHGTLPVRGQVITGKVVSDKMTGSVVVQRDYLHFVRKYQRYEKRSSKIHAHNPPCLHARVGDMVSIAECRPLSKTKTYVVVEVNRA.

Belongs to the universal ribosomal protein uS17 family. Part of the 30S ribosomal subunit.

Functionally, one of the primary rRNA binding proteins, it binds specifically to the 5'-end of 16S ribosomal RNA. This Methanospirillum hungatei JF-1 (strain ATCC 27890 / DSM 864 / NBRC 100397 / JF-1) protein is Small ribosomal subunit protein uS17.